We begin with the raw amino-acid sequence, 352 residues long: Keratocan (352 aa).

The N-terminal stretch at 1–20 (MAGTICFIMWVLFITDTVWS) is a signal peptide. Residues 33–71 (DDWTIHDFECPMECFCPPSFPTALYCENRGLKEIPAIPS) form the LRRNT domain. Disulfide bonds link Cys42-Cys48 and Cys46-Cys58. LRR repeat units lie at residues 72 to 93 (RIWY…PFEN), 96 to 117 (QLRW…KGAL), 122 to 142 (KLLF…PLPR), 143 to 164 (SLEQ…TFSN), 167 to 180 (NLTL…KLVD), 193 to 213 (NLMQ…RLPA), 214 to 235 (NTMQ…YFNV), 238 to 258 (KVAF…PSRG), 263 to 282 (SILD…RISA), and 283 to 304 (HLQH…VICP). An N-linked (GlcNAc...) (keratan sulfate) asparagine glycan is attached at Asn93. N-linked (GlcNAc...) (keratan sulfate) asparagine glycosylation occurs at Asn167. Asn222 is a glycosylation site (N-linked (GlcNAc...) asparagine). Asn298 carries N-linked (GlcNAc...) asparagine glycosylation. A disulfide bridge connects residues Cys303 and Cys343.

It belongs to the small leucine-rich proteoglycan (SLRP) family. SLRP class II subfamily. Binds keratan sulfate chains. In terms of tissue distribution, cornea (at protein level). Increased expression in the stroma of keratoconus corneas. Also detected in trachea, and in low levels, in intestine, skeletal muscle, ovary, lung and putamen.

The protein localises to the secreted. Its subcellular location is the extracellular space. It is found in the extracellular matrix. In terms of biological role, may be important in developing and maintaining corneal transparency and for the structure of the stromal matrix. The polypeptide is Keratocan (KERA) (Homo sapiens (Human)).